Here is a 2289-residue protein sequence, read N- to C-terminus: Protein Ycf2 (2289 aa).

1643-1650 (GSIGTGRS) serves as a coordination point for ATP.

This sequence belongs to the Ycf2 family.

The protein localises to the plastid. It localises to the chloroplast stroma. Functionally, probable ATPase of unknown function. Its presence in a non-photosynthetic plant (Epifagus virginiana) and experiments in tobacco indicate that it has an essential function which is probably not related to photosynthesis. In Capsella bursa-pastoris (Shepherd's purse), this protein is Protein Ycf2.